Here is a 1055-residue protein sequence, read N- to C-terminus: Sodium/potassium exporting P-type ATPase 1 (1055 aa).

The Cytoplasmic segment spans residues 1 to 73; that stretch reads MTPSIGYVDE…GADEKISISK (73 aa). A helical transmembrane segment spans residues 74-94; that stretch reads ILAHQIFNAMVLVLIISLIIA. Topologically, residues 95 to 99 are extracellular; sequence LAIKD. Residues 100–120 form a helical membrane-spanning segment; that stretch reads WISGGVIGFVVFINIFVGFIQ. The Cytoplasmic segment spans residues 121–298; the sequence is ELKAEKTMGS…TNVGTPLQRK (178 aa). Residues 299–319 traverse the membrane as a helical segment; the sequence is LSWLAILLFWVAVLFAIVVMA. Topologically, residues 320 to 328 are extracellular; it reads SQEMRVNRN. Residues 329–349 traverse the membrane as a helical segment; it reads VAIYAICVALSMIPSSLVVVL. Topologically, residues 350–789 are cytoplasmic; that stretch reads TITMAIGAQV…RMSSNIQKFV (440 aa). The 4-aspartylphosphate intermediate role is filled by Asp-385. Residues Asp-385 and Thr-387 each contribute to the Mg(2+) site. Thr-387, Glu-491, Lys-544, Arg-586, Thr-646, Gly-647, Asp-648, Arg-705, and Lys-711 together coordinate ATP. Asp-730 is a Mg(2+) binding site. Asn-733 is a binding site for ATP. Residues 790–810 form a helical membrane-spanning segment; the sequence is LQLLAENVAQALYLMIGLAFI. Topologically, residues 811–816 are extracellular; the sequence is DKSGYS. A helical membrane pass occupies residues 817–837; sequence VFPLSPVEVLWIIVVTSCFPA. Over 838–866 the chain is Cytoplasmic; sequence MGLGQEKASHDILEQPPNATIFTWEVIID. A helical membrane pass occupies residues 867 to 887; the sequence is MIAYGFWMAVCCLVCFVCIVY. Over 888-913 the chain is Extracellular; it reads GKGDGSLGENCNEGSDTGCNLVFRGR. Residues 914 to 934 traverse the membrane as a helical segment; that stretch reads SGAFAAFTWCALLLAWECIHL. Residues 935–962 lie on the Cytoplasmic side of the membrane; it reads RLSFFKMRPELENPWWKQLAIDLWDNQF. A helical transmembrane segment spans residues 963 to 983; that stretch reads LFWSVMGAIVSVFPVVYIPVI. The Extracellular segment spans residues 984-990; it reads NNKVFLH. The chain crosses the membrane as a helical span at residues 991-1011; it reads APIGYEWGLAVAFTILFLIGA. Residues 1012 to 1055 lie on the Cytoplasmic side of the membrane; it reads EGWKWFKRVYYRKSNANNPEYDLERNDPFKEYSSFSKSNTMEIV.

This sequence belongs to the cation transport ATPase (P-type) (TC 3.A.3) family. Type IID subfamily. It depends on Mg(2+) as a cofactor. Post-translationally, the active site is phosphorylated in presence of sodium or potassium and in conditions of higher pH. Not phosphorylated in presence of calcium ions.

It is found in the cell membrane. The catalysed reaction is Na(+)(in) + ATP + H2O = Na(+)(out) + ADP + phosphate + H(+). The enzyme catalyses K(+)(in) + ATP + H2O = K(+)(out) + ADP + phosphate + H(+). Catalyzes the hydrolysis of ATP coupled with the export of sodium and potassium from the cell. May be an inefficient potassium exporter. May transport other cations such as lithium. Sodium/potassium efflux ATPases are involved in salt tolerance and maintaining the membrane potential across the plasma membrane in high salinity (Na+) or alkaline (K+) environments. This is Sodium/potassium exporting P-type ATPase 1 from Schwanniomyces occidentalis (Yeast).